The following is a 296-amino-acid chain: uncharacterized protein (296 aa).

The N-terminal 57 residues, 1–57, are a transit peptide targeting the chloroplast; sequence MTSFLSFSAISAHPPTFSGASFRPRSFSPRLFKSCVKCTYAEAGLSSASWSAPIDIV.

It belongs to the NAD(P)-dependent epimerase/dehydratase family.

The protein resides in the plastid. It is found in the chloroplast. Its subcellular location is the plastoglobule. This is an uncharacterized protein from Arabidopsis thaliana (Mouse-ear cress).